We begin with the raw amino-acid sequence, 249 residues long: Eukaryotic translation initiation factor 3 subunit K (249 aa).

Residues 46 to 222 (FDCYANLALL…VKVPTNKENE (177 aa)) form the PCI domain.

Belongs to the eIF-3 subunit K family. As to quaternary structure, component of the eukaryotic translation initiation factor 3 (eIF-3) complex.

The protein resides in the cytoplasm. Its function is as follows. Component of the eukaryotic translation initiation factor 3 (eIF-3) complex, which is involved in protein synthesis of a specialized repertoire of mRNAs and, together with other initiation factors, stimulates binding of mRNA and methionyl-tRNAi to the 40S ribosome. The eIF-3 complex specifically targets and initiates translation of a subset of mRNAs involved in cell proliferation. This chain is Eukaryotic translation initiation factor 3 subunit K, found in Aspergillus fumigatus (strain CBS 144.89 / FGSC A1163 / CEA10) (Neosartorya fumigata).